A 285-amino-acid polypeptide reads, in one-letter code: Probable endonuclease 4 (285 aa).

Zn(2+) contacts are provided by His69, His109, Glu145, Asp179, His182, His216, Asp229, His231, and Glu261.

Belongs to the AP endonuclease 2 family. Zn(2+) serves as cofactor.

It carries out the reaction Endonucleolytic cleavage to 5'-phosphooligonucleotide end-products.. In terms of biological role, endonuclease IV plays a role in DNA repair. It cleaves phosphodiester bonds at apurinic or apyrimidinic (AP) sites, generating a 3'-hydroxyl group and a 5'-terminal sugar phosphate. This Salmonella newport (strain SL254) protein is Probable endonuclease 4.